The sequence spans 1127 residues: Testis-expressed protein 2 (1127 aa).

2 disordered regions span residues 1 to 27 (MTSL…HVQR) and 133 to 279 (AVSP…SFFK). A compositionally biased stretch (low complexity) spans 133 to 187 (AVSPGSSSSGPLASSPSVSSLSEQKTSSSSPLSSPSKSPILSSSASTSTLSSAKP). Residue S196 is modified to Phosphoserine. Over residues 249 to 275 (QFTQPRNTGGDSKTAPSSPLTSPSDTR) the composition is skewed to polar residues. At T262 the chain carries Phosphothreonine. S265, S266, S270, and S295 each carry phosphoserine. Residue N330 is glycosylated (N-linked (GlcNAc...) asparagine). Residues 348–386 (EEECDSEGDGYGSDSNIPRSDHPKSTGEPTREIELKSSQ) form a disordered region. A compositionally biased stretch (basic and acidic residues) spans 366-382 (RSDHPKSTGEPTREIEL). A run of 2 helical transmembrane segments spans residues 475-495 (TLGF…PHYV) and 497-517 (GLFL…WFFT). 4 disordered regions span residues 648–685 (KAQT…QRDQ), 715–764 (KKSS…QKEL), 786–816 (QESR…PPSE), and 947–980 (DEES…GYVG). The span at 650-670 (QTDKETSEEKPPAEGSEDPKK) shows a compositional bias: basic and acidic residues. Residues S732, S738, S744, S748, S751, S798, and S815 each carry the phosphoserine modification. The span at 735–750 (NSPSGHLTHSRSSSKG) shows a compositional bias: polar residues. Over residues 787–804 (ESRSPQRSPLQSAESSPT) the composition is skewed to polar residues. The SMP-LTD domain occupies 816-1101 (EEEEQEAWVN…MPNMDDVYIT (286 aa)). A compositionally biased stretch (acidic residues) spans 947 to 962 (DEESSSAGSSEEDDAP).

It is found in the endoplasmic reticulum membrane. It localises to the nucleus membrane. During endoplasmic reticulum (ER) stress or when cellular ceramide levels increase, may induce contacts between the ER and medial-Golgi complex to facilitate non-vesicular transport of ceramides from the ER to the Golgi complex where they are converted to complex sphingolipids, preventing toxic ceramide accumulation. The protein is Testis-expressed protein 2 (TEX2) of Homo sapiens (Human).